The following is a 193-amino-acid chain: Ion-translocating oxidoreductase complex subunit A (193 aa).

Transmembrane regions (helical) follow at residues 5–25 (LLLF…FLGL), 39–59 (IGMG…SWLM), 62–82 (FILV…LVIA), 102–122 (LLGI…VALL), 134–154 (AVYG…FAAI), and 171–191 (SIGL…SGLV).

The protein belongs to the NqrDE/RnfAE family. As to quaternary structure, the complex is composed of six subunits: RnfA, RnfB, RnfC, RnfD, RnfE and RnfG.

Its subcellular location is the cell inner membrane. In terms of biological role, part of a membrane-bound complex that couples electron transfer with translocation of ions across the membrane. The protein is Ion-translocating oxidoreductase complex subunit A of Proteus mirabilis (strain HI4320).